The following is a 347-amino-acid chain: Oocyte-specific homeobox protein 6 (347 aa).

Disordered stretches follow at residues Met-1–Phe-20 and Pro-54–Gln-86. Residues Gln-72–Met-85 are compositionally biased toward polar residues. The homeobox DNA-binding region spans His-145–Ser-204.

The protein belongs to the paired homeobox family. Obox subfamily. In terms of tissue distribution, specifically expressed in early embryos.

It is found in the nucleus. Functionally, transcription factor required for zygotic genome activation (ZGA), a critical event in early embryonic development during which the developmental control passes from maternally provided mRNAs to the expression of the zygotic genome after fertilization. This chain is Oocyte-specific homeobox protein 6, found in Mus musculus (Mouse).